A 620-amino-acid chain; its full sequence is 1-deoxy-D-xylulose-5-phosphate synthase (620 aa).

Residues His-80 and 121–123 (GHS) each bind thiamine diphosphate. Mg(2+) is bound at residue Asp-152. Thiamine diphosphate-binding positions include 153 to 154 (GA), Asn-181, Tyr-288, and Glu-370. Mg(2+) is bound at residue Asn-181.

The protein belongs to the transketolase family. DXPS subfamily. Homodimer. Requires Mg(2+) as cofactor. Thiamine diphosphate serves as cofactor.

It catalyses the reaction D-glyceraldehyde 3-phosphate + pyruvate + H(+) = 1-deoxy-D-xylulose 5-phosphate + CO2. The protein operates within metabolic intermediate biosynthesis; 1-deoxy-D-xylulose 5-phosphate biosynthesis; 1-deoxy-D-xylulose 5-phosphate from D-glyceraldehyde 3-phosphate and pyruvate: step 1/1. Its function is as follows. Catalyzes the acyloin condensation reaction between C atoms 2 and 3 of pyruvate and glyceraldehyde 3-phosphate to yield 1-deoxy-D-xylulose-5-phosphate (DXP). This is 1-deoxy-D-xylulose-5-phosphate synthase from Escherichia coli (strain SMS-3-5 / SECEC).